The sequence spans 601 residues: Jacalin-related lectin 3 (601 aa).

3 consecutive Jacalin-type lectin domains span residues P13 to P155, A240 to E382, and P438 to H583.

Belongs to the jacalin lectin family.

The sequence is that of Jacalin-related lectin 3 (JAL3) from Arabidopsis thaliana (Mouse-ear cress).